The sequence spans 146 residues: uncharacterized protein (146 aa).

Residues 1-137 (MLSQEFFNSF…TINVMNQIHE (137 aa)) enclose the HTH marR-type domain.

This is an uncharacterized protein from Staphylococcus aureus (strain MRSA252).